The primary structure comprises 487 residues: uncharacterized protein (487 aa).

ABC transporter domains lie at 5–249 and 265–487; these read VKFA…IPVK and ISME…VIHA. 297-304 serves as a coordination point for ATP; sequence GSNGSGKT.

Belongs to the ABC transporter superfamily.

The protein resides in the mitochondrion. This is an uncharacterized protein from Schizosaccharomyces pombe (strain 972 / ATCC 24843) (Fission yeast).